Consider the following 131-residue polypeptide: Small ribosomal subunit protein uS8 (131 aa).

Belongs to the universal ribosomal protein uS8 family. Part of the 30S ribosomal subunit. Contacts proteins S5 and S12.

Functionally, one of the primary rRNA binding proteins, it binds directly to 16S rRNA central domain where it helps coordinate assembly of the platform of the 30S subunit. The polypeptide is Small ribosomal subunit protein uS8 (Hydrogenovibrio crunogenus (strain DSM 25203 / XCL-2) (Thiomicrospira crunogena)).